Reading from the N-terminus, the 254-residue chain is MNDLFSLAGKNILITGSAQGIGFLLATGLGKYGAQIIINDITAERAELAVEKLHQEGIQAVAAPFNVTHKHEIDAAVEHIEKDIGPIDVLVNNAGIQRRHPFTEFPEQEWNDVIAVNQTAVFLVSQAVTRHMVERKAGKVINICSMQSELGRDTITPYAASKGAVKMLTRGMCVELARHNIQVNGIAPGYFKTEMTKALVEDEAFTAWLCKRTPAARWGDPQELIGAAVFLSSKASDFVNGHLLFVDGGMLVAV.

13–37 contacts NADP(+); it reads LITGSAQGIGFLLATGLGKYGAQII. Ser145 is a substrate binding site. Tyr158 functions as the Proton acceptor in the catalytic mechanism.

The protein belongs to the short-chain dehydrogenases/reductases (SDR) family.

It catalyses the reaction D-gluconate + NAD(+) = 5-dehydro-D-gluconate + NADH + H(+). The catalysed reaction is D-gluconate + NADP(+) = 5-dehydro-D-gluconate + NADPH + H(+). It functions in the pathway carbohydrate acid metabolism; L-idonate degradation. Functionally, catalyzes the reduction of 5-keto-D-gluconate to D-gluconate, using either NADH or NADPH. Is likely involved in an L-idonate degradation pathway that allows E.coli to utilize L-idonate as the sole carbon and energy source. Is also able to catalyze the reverse reaction in vitro, but the D-gluconate oxidation by the enzyme can only proceed with NAD. This chain is 5-keto-D-gluconate 5-reductase, found in Escherichia coli O6:H1 (strain CFT073 / ATCC 700928 / UPEC).